The primary structure comprises 37 residues: Large ribosomal subunit protein bL36 (37 aa).

Belongs to the bacterial ribosomal protein bL36 family.

This chain is Large ribosomal subunit protein bL36, found in Solibacter usitatus (strain Ellin6076).